Here is a 522-residue protein sequence, read N- to C-terminus: Maturase K (522 aa).

The protein belongs to the intron maturase 2 family. MatK subfamily.

It is found in the plastid. The protein localises to the chloroplast. Its function is as follows. Usually encoded in the trnK tRNA gene intron. Probably assists in splicing its own and other chloroplast group II introns. The polypeptide is Maturase K (Aristea glauca).